A 218-amino-acid polypeptide reads, in one-letter code: Capsid protein (218 aa).

Methionine 1 is modified (N-acetylmethionine; by host). A compositionally biased stretch (low complexity) spans 1 to 10 (MDKSESTSAG). Positions 1–30 (MDKSESTSAGRNRRRRPRRGSRSASSSADA) are disordered. A compositionally biased stretch (basic residues) spans 11–21 (RNRRRRPRRGS).

Belongs to the cucumovirus capsid protein family.

The protein resides in the virion. Its function is as follows. Capsid protein. Probably binds RNA and plays a role in packaging. The protein is Capsid protein of Cucumber mosaic virus (strain P6) (CMV).